A 378-amino-acid polypeptide reads, in one-letter code: MGELGEHRSRSSLLSIPVLDTKTSGGSEYRESDGSLDLQSTLFEDHWLQSSQATTERNTDDPEEEIPPEEMVGEELPEVSNLEDSLRRDLEVEVVGMSHLSINERTTPTTSSAKCRKKKNHRLLELAKPKFNWQCLKDRTGRCCKGHVWISPRKTNLQFCLYWPSVYWTERFIEDTTLTITVPEVSRRVEELSRPKRFYQEYYNNNRTTPIWPIPRSTLEYQASNRLKRLATPKIRNNIWSINMSEVSQVSRAAQMAVPTPRTLRLAKPRAPATLLEEWDPMPKPKPYVSDYNRLLQLATPKALSEKCVPDRSPQWEVLNVTKNAVASSRIISLAQPKIRKDLNEGYNPYYISPASLVAQASPRIYELAVPKHITKKV.

Disordered regions lie at residues 1–35 (MGEL…SDGS) and 47–79 (WLQS…LPEV). Residues 47–56 (WLQSSQATTE) are compositionally biased toward polar residues. Over residues 61-77 (DPEEEIPPEEMVGEELP) the composition is skewed to acidic residues. 7 THEG repeats span residues 113–132 (AKCR…PKFN), 179–198 (TITV…PKRF), 217–236 (STLE…PKIR), 253–272 (AAQM…PRAP), 285–304 (PKPY…PKAL), 321–340 (VTKN…PKIR), and 355–374 (ASLV…PKHI). S290 is subject to Phosphoserine.

Interacts with CCT5.

The protein localises to the nucleus. May be involved (but not essential) in spermatogenesis. This is Sperm microtubule associated protein 2 from Rattus norvegicus (Rat).